The sequence spans 215 residues: UPF0319 protein VV2_0960 (215 aa).

The N-terminal stretch at 1-21 (MNIIKPLTCILAMSISGLATA) is a signal peptide.

This sequence belongs to the UPF0319 family.

The protein is UPF0319 protein VV2_0960 of Vibrio vulnificus (strain CMCP6).